The primary structure comprises 427 residues: 3-phosphoshikimate 1-carboxyvinyltransferase (427 aa).

Lys-22, Ser-23, and Arg-27 together coordinate 3-phosphoshikimate. Lys-22 provides a ligand contact to phosphoenolpyruvate. The phosphoenolpyruvate site is built by Gly-96 and Arg-124. 3-phosphoshikimate contacts are provided by Ser-169, Ser-170, Gln-171, Ser-197, Asp-313, Asn-336, and Lys-340. A phosphoenolpyruvate-binding site is contributed by Gln-171. Asp-313 (proton acceptor) is an active-site residue. Phosphoenolpyruvate contacts are provided by Arg-344, Arg-386, and Lys-411.

This sequence belongs to the EPSP synthase family. As to quaternary structure, monomer.

Its subcellular location is the cytoplasm. The enzyme catalyses 3-phosphoshikimate + phosphoenolpyruvate = 5-O-(1-carboxyvinyl)-3-phosphoshikimate + phosphate. The protein operates within metabolic intermediate biosynthesis; chorismate biosynthesis; chorismate from D-erythrose 4-phosphate and phosphoenolpyruvate: step 6/7. Its function is as follows. Catalyzes the transfer of the enolpyruvyl moiety of phosphoenolpyruvate (PEP) to the 5-hydroxyl of shikimate-3-phosphate (S3P) to produce enolpyruvyl shikimate-3-phosphate and inorganic phosphate. In Shigella sonnei, this protein is 3-phosphoshikimate 1-carboxyvinyltransferase.